Here is a 243-residue protein sequence, read N- to C-terminus: Mannosyl-3-phosphoglycerate phosphatase (243 aa).

The Nucleophile role is filled by Asp8. Residues Asp8, Asp10, Ser169, and Asp204 each contribute to the Mg(2+) site.

Belongs to the HAD-like hydrolase superfamily. MPGP family. Mg(2+) is required as a cofactor.

The protein resides in the cytoplasm. The enzyme catalyses 2-O-(alpha-D-mannosyl)-3-phosphoglycerate + H2O = (2R)-2-O-(alpha-D-mannosyl)-glycerate + phosphate. It participates in carbohydrate biosynthesis; 2-(alpha-D-mannosyl)-D-glycerate biosynthesis; 2-(alpha-D-mannosyl)-D-glycerate from GDP-alpha-D-mannose (MPG route): step 2/2. In terms of biological role, hydrolyzes mannosyl-3-phosphoglycerate (MPG) to form the osmolyte mannosylglycerate (MG). The enzyme is absolutely specific for MPG. The polypeptide is Mannosyl-3-phosphoglycerate phosphatase (Pyrococcus horikoshii (strain ATCC 700860 / DSM 12428 / JCM 9974 / NBRC 100139 / OT-3)).